The following is a 99-amino-acid chain: Cell division protein FtsB (99 aa).

Topologically, residues 1-3 (MKF) are cytoplasmic. Residues 4–21 (FVIALIVLLGLLQYRLWS) traverse the membrane as a helical segment. Topologically, residues 22–99 (GDNSLPEYFV…GDRSVSSPSQ (78 aa)) are periplasmic. Positions 31 to 73 (VLQKQIAAQQDGNAKLNERNQVLKEEIIDLKSGTEAIEERARN) form a coiled coil.

The protein belongs to the FtsB family. Part of a complex composed of FtsB, FtsL and FtsQ.

Its subcellular location is the cell inner membrane. Its function is as follows. Essential cell division protein. May link together the upstream cell division proteins, which are predominantly cytoplasmic, with the downstream cell division proteins, which are predominantly periplasmic. This chain is Cell division protein FtsB, found in Shewanella sp. (strain MR-4).